A 420-amino-acid polypeptide reads, in one-letter code: Histidine--tRNA ligase (420 aa).

This sequence belongs to the class-II aminoacyl-tRNA synthetase family. Homodimer.

Its subcellular location is the cytoplasm. The catalysed reaction is tRNA(His) + L-histidine + ATP = L-histidyl-tRNA(His) + AMP + diphosphate + H(+). The sequence is that of Histidine--tRNA ligase from Clostridioides difficile (strain 630) (Peptoclostridium difficile).